Here is a 473-residue protein sequence, read N- to C-terminus: Deoxyribodipyrimidine photo-lyase (473 aa).

The region spanning 2–134 is the Photolyase/cryptochrome alpha/beta domain; the sequence is PTHLVWFRRD…ICEGFDDSVI (133 aa). Residues asparagine 109 and glutamate 110 each coordinate (6R)-5,10-methylene-5,6,7,8-tetrahydrofolate. An FAD-binding site is contributed by tyrosine 224. A DNA-binding site is contributed by arginine 228. 236-240 lines the FAD pocket; the sequence is TSRLS. Interaction with DNA regions lie at residues 276-283 and 343-344; these read ELIWREFY and NR. 374–376 is an FAD binding site; it reads DGD. Glutamine 406 contacts DNA.

It belongs to the DNA photolyase class-1 family. In terms of assembly, monomer. FAD is required as a cofactor. (6R)-5,10-methylene-5,6,7,8-tetrahydrofolate serves as cofactor.

The enzyme catalyses cyclobutadipyrimidine (in DNA) = 2 pyrimidine residues (in DNA).. Its function is as follows. Involved in repair of UV radiation-induced DNA damage. Catalyzes the light-dependent monomerization (300-600 nm) of cyclobutyl pyrimidine dimers (in cis-syn configuration), which are formed between adjacent bases on the same DNA strand upon exposure to ultraviolet radiation. The sequence is that of Deoxyribodipyrimidine photo-lyase (phrB) from Salmonella typhimurium (strain LT2 / SGSC1412 / ATCC 700720).